A 317-amino-acid chain; its full sequence is L-lactate dehydrogenase 1 (317 aa).

NAD(+) contacts are provided by residues V17, D38, K43, Y69, and 83-84 (GA). Q86 and R92 together coordinate substrate. NAD(+) contacts are provided by residues S105, 122–124 (ATN), and S147. 124-127 (NPVD) serves as a coordination point for substrate. 152-155 (DSAR) contributes to the substrate binding site. Residue H179 is the Proton acceptor of the active site. Y223 bears the Phosphotyrosine mark. T232 is a substrate binding site.

This sequence belongs to the LDH/MDH superfamily. LDH family. Homotetramer.

Its subcellular location is the cytoplasm. The catalysed reaction is (S)-lactate + NAD(+) = pyruvate + NADH + H(+). It participates in fermentation; pyruvate fermentation to lactate; (S)-lactate from pyruvate: step 1/1. Catalyzes the conversion of lactate to pyruvate (Potential). Appears to be the primary factor that allows S.aureus growth during nitrosative stress in both aerobically and anaerobically cultured cells. This is L-lactate dehydrogenase 1 from Staphylococcus aureus (strain USA300).